The primary structure comprises 524 residues: Acetyl-CoA hydrolase (524 aa).

275–279 lines the CoA pocket; sequence GIGNI. The active-site 5-glutamyl coenzyme A thioester intermediate is the Glu300. 2 residues coordinate CoA: Asn390 and Gly394.

The protein belongs to the acetyl-CoA hydrolase/transferase family.

The protein resides in the cytoplasm. The catalysed reaction is acetyl-CoA + H2O = acetate + CoA + H(+). Its function is as follows. Presumably involved in regulating the intracellular acetyl-CoA pool for fatty acid and cholesterol synthesis and fatty acid oxidation. This Candida albicans (strain SC5314 / ATCC MYA-2876) (Yeast) protein is Acetyl-CoA hydrolase (ACH1).